The chain runs to 338 residues: Ferrochelatase (338 aa).

2 residues coordinate Fe cation: histidine 210 and glutamate 291.

Belongs to the ferrochelatase family.

It localises to the cytoplasm. The enzyme catalyses heme b + 2 H(+) = protoporphyrin IX + Fe(2+). It functions in the pathway porphyrin-containing compound metabolism; protoheme biosynthesis; protoheme from protoporphyrin-IX: step 1/1. Catalyzes the ferrous insertion into protoporphyrin IX. The chain is Ferrochelatase from Helicobacter acinonychis (strain Sheeba).